The sequence spans 694 residues: uncharacterized protein (694 aa).

A coiled-coil region spans residues 15-51 (HKEKMELLDQFDNERKEWESQWKIMQKKIEELCREVK). 3 disordered regions span residues 259 to 286 (LKRNETPPVPPPRSTSRNFPSSDSEQAY), 461 to 490 (QNHSCSKSSEDLKPCDTSSTHTGSISQSND), and 643 to 680 (NASHGKGFSRPARPANRRLPSRWASRSPSAPPALRRTT). Polar residues-rich tracts occupy residues 272–283 (STSRNFPSSDSE) and 476–490 (DTSSTHTGSISQSND). The span at 663–677 (SRWASRSPSAPPALR) shows a compositional bias: low complexity.

This is an uncharacterized protein from Homo sapiens (Human).